A 337-amino-acid polypeptide reads, in one-letter code: Monoacylglycerol lipase abhd6-B (337 aa).

The Extracellular portion of the chain corresponds to 1–19; sequence MDIDVLNMFLVAGGTLLVP. A helical; Signal-anchor for type II membrane protein membrane pass occupies residues 20-42; the sequence is LLAFMTSFLLWPAALIRIYYWYW. The Cytoplasmic portion of the chain corresponds to 43-337; the sequence is RRALGMQVKY…QSTDNHKKHD (295 aa). Residues 72–313 form the AB hydrolase-1 domain; it reads PSVLMLHGFS…CGHSVVMERP (242 aa). Ser-148 serves as the catalytic Nucleophile. Catalysis depends on charge relay system residues Asp-278 and His-306.

The protein belongs to the AB hydrolase superfamily.

It localises to the late endosome membrane. The protein localises to the lysosome membrane. The protein resides in the mitochondrion membrane. The catalysed reaction is Hydrolyzes glycerol monoesters of long-chain fatty acids.. The enzyme catalyses 1-octanoylglycerol + H2O = octanoate + glycerol + H(+). It carries out the reaction 1-decanoylglycerol + H2O = decanoate + glycerol + H(+). It catalyses the reaction 1-dodecanoylglycerol + H2O = dodecanoate + glycerol + H(+). The catalysed reaction is 1-tetradecanoylglycerol + H2O = tetradecanoate + glycerol + H(+). The enzyme catalyses 2-hexadecanoylglycerol + H2O = glycerol + hexadecanoate + H(+). It carries out the reaction 2-(9Z-octadecenoyl)-glycerol + H2O = glycerol + (9Z)-octadecenoate + H(+). It catalyses the reaction 1-(9Z-octadecenoyl)-glycerol + H2O = glycerol + (9Z)-octadecenoate + H(+). The catalysed reaction is 2-(9Z,12Z-octadecadienoyl)-glycerol + H2O = (9Z,12Z)-octadecadienoate + glycerol + H(+). The enzyme catalyses 2-(5Z,8Z,11Z,14Z-eicosatetraenoyl)-glycerol + H2O = glycerol + (5Z,8Z,11Z,14Z)-eicosatetraenoate + H(+). It carries out the reaction 1-(5Z,8Z,11Z,14Z-eicosatetraenoyl)-glycerol + H2O = glycerol + (5Z,8Z,11Z,14Z)-eicosatetraenoate + H(+). It catalyses the reaction 1-(9Z,12Z-octadecadienoyl)-glycerol + H2O = (9Z,12Z)-octadecadienoate + glycerol + H(+). The catalysed reaction is 3-(9Z-octadecenoyl)-sn-glycero-1-phospho-(3'-(9Z-octadecenoyl)-1'-sn-glycerol) + H2O = 3-(9Z-octadecenoyl)-sn-glycero-1-phospho-(1'-sn-glycerol) + (9Z)-octadecenoate + H(+). The enzyme catalyses (S,S)-2-(9Z-octadecenoyl)-sn-glycero-1-phospho-(2'-(9Z-octadecenoyl)-1'-sn-glycerol) + H2O = (S,S)-2-(9Z-octadecenoyl)-sn-glycero-1-phospho-(1'-sn-glycerol) + (9Z)-octadecenoate + H(+). It carries out the reaction (R,R)-2-(9Z-octadecenoyl)-sn-glycero-3-phospho-(2'-(9Z-octadecenoyl)-3'-sn-glycerol) + H2O = (R,R)-2-(9Z-octadecenoyl)-sn-glycero-3-phospho-(3'-sn-glycerol) + (9Z)-octadecenoate + H(+). Functionally, lipase that preferentially hydrolysis medium-chain saturated monoacylglycerols including 2-arachidonoylglycerol. Through 2-arachidonoylglycerol degradation may regulate endocannabinoid signaling pathways. Also has a lysophosphatidyl lipase activity with a preference for lysophosphatidylglycerol among other lysophospholipids. Also able to degrade bis(monoacylglycero)phosphate (BMP) and constitutes the major enzyme for BMP catabolism. BMP, also known as lysobisphosphatidic acid, is enriched in late endosomes and lysosomes and plays a key role in the formation of intraluminal vesicles and in lipid sorting. This chain is Monoacylglycerol lipase abhd6-B (abhd6-b), found in Xenopus laevis (African clawed frog).